The sequence spans 643 residues: Thread biopolymer filament subunit alpha (643 aa).

Polar residues predominate over residues 1 to 13 (MSISQTVSKSYTK). The segment at 1–34 (MSISQTVSKSYTKSVSRGGQGVSYSQSSSHKVGG) is disordered. A head region spans residues 1–191 (MSISQTVSKS…PDTVQHTRIR (191 aa)). A compositionally biased stretch (low complexity) spans 14–31 (SVSRGGQGVSYSQSSSHK). Residues 192-510 (EKQDLQTLNT…KLLDSEETRI (319 aa)) form the IF rod domain. Residues 193–227 (KQDLQTLNTKFANLVDQVRTLEQHNAILKAQISMI) are coil 1A. Residues 228 to 240 (TSPSDTPEGPVNT) form a linker 1 region. The coil 1B stretch occupies residues 241–341 (AVVASTVTAT…YNARVREVQA (101 aa)). The interval 342–362 (AVTGGPTAAYSIRVDNTHQAI) is linker 12. The interval 363 to 381 (DLTTSLQEMKTHYEVLATK) is coil 2A. The segment at 382 to 389 (SREEAFTQ) is linker 2. Residues 390 to 510 (VQPRIQEMAV…KLLDSEETRI (121 aa)) are coil 2B. The segment at 511–643 (SHGGGITITT…SSARSSSRIY (133 aa)) is tail. The interval 622–643 (SRAGYSASRKSYSSARSSSRIY) is disordered.

This sequence belongs to the intermediate filament family. As to quaternary structure, coiled-coil heterodimer of an alpha and a gamma subunit. Assemble into 10 nm filaments. Forms a massive, conical, intermediate filament biopolymer of approximately 60 cm.

It localises to the secreted. It is found in the extracellular space. Its function is as follows. Released extracellularly into seawater and provides physical and biological defense against invasive organism by modulation of the viscoelastic properties of mucus. This Eptatretus stoutii (Pacific hagfish) protein is Thread biopolymer filament subunit alpha.